The chain runs to 195 residues: Triosephosphate isomerase, cytosolic (195 aa).

Catalysis depends on His-37, which acts as the Electrophile. The Proton acceptor role is filled by Glu-107.

This sequence belongs to the triosephosphate isomerase family. In terms of assembly, homodimer.

It is found in the cytoplasm. It catalyses the reaction D-glyceraldehyde 3-phosphate = dihydroxyacetone phosphate. It functions in the pathway carbohydrate biosynthesis; gluconeogenesis. The protein operates within carbohydrate degradation; glycolysis; D-glyceraldehyde 3-phosphate from glycerone phosphate: step 1/1. This is Triosephosphate isomerase, cytosolic from Lactuca sativa (Garden lettuce).